Consider the following 329-residue polypeptide: Serpentine receptor class alpha-6 (329 aa).

7 helical membrane-spanning segments follow: residues 26-46, 68-88, 104-124, 143-163, 187-207, 238-258, and 273-293; these read VDLLAIILAFFASYFAIKIVI, LYQISYGIEAIGMLYRGFFML, YFKVLMIGTSGMIFGQTGLLI, IGVCISLIVLVCSTSSGFIIL, NLFSILSTVLTLFNLIVSIFI, ICFLALSQFLWMFMYSFGILI, and FWIAWCYTMPFIALMFPVLLI.

It belongs to the nematode receptor-like protein sra family.

The protein resides in the membrane. The protein is Serpentine receptor class alpha-6 (sra-6) of Caenorhabditis elegans.